Here is a 551-residue protein sequence, read N- to C-terminus: Solute carrier family 22 member 13 (551 aa).

Residues 1–20 lie on the Cytoplasmic side of the membrane; sequence MAQFVQVLAEIGDFGRFQIQ. The chain crosses the membrane as a helical span at residues 21–41; sequence LLILLCVLNFLSPFYFFAHVF. The Extracellular segment spans residues 42–138; the sequence is MVLDEPHHCA…LVCDRKHLKD (97 aa). N-linked (GlcNAc...) asparagine glycosylation is found at Asn57, Asn61, Asn92, and Asn104. The chain crosses the membrane as a helical span at residues 139 to 159; it reads TTQSVFMAGLLVGTLMFGPLC. At 160–167 the chain is on the cytoplasmic side; sequence DRIGRKAT. A helical membrane pass occupies residues 168 to 188; it reads ILAQLLLFTLIGLATAFVPSF. The Extracellular segment spans residues 189-195; it reads ELYMALR. The helical transmembrane segment at 196 to 216 threads the bilayer; the sequence is FAVATAVAGLSFSNVTLLTEW. The Cytoplasmic segment spans residues 217-224; sequence VGPSWRTQ. A helical transmembrane segment spans residues 225–245; it reads AVVLAQCNFSLGQMVLAGLAY. At 246 to 251 the chain is on the extracellular side; sequence GFRNWR. Residues 252 to 272 form a helical membrane-spanning segment; the sequence is LLQITGTAPGLLLFFYFWALP. Residues 273 to 332 are Cytoplasmic-facing; the sequence is ESARWLLTRGRMDEAIQLIQKAASVNRRKLSPELMNQLVPEKTGPSGNALDLFRHPQLRK. The helical transmembrane segment at 333–353 threads the bilayer; it reads VTLIIFCVWFVDSLGYYGLSL. Residue Gln354 is a topological domain, extracellular. Residues 355 to 375 traverse the membrane as a helical segment; the sequence is VGDFGLDVYLTQLIFGAVEVP. Residues 376-397 lie on the Cytoplasmic side of the membrane; sequence ARCSSIFMMQRFGRKWSQLGTL. Residues 398–418 traverse the membrane as a helical segment; that stretch reads VLGGLMCIIIIFIPADLPVVV. The Extracellular portion of the chain corresponds to 419 to 427; the sequence is TMLAVVGKM. Residues 428 to 448 traverse the membrane as a helical segment; it reads ATAAAFTISYVYSAELFPTIL. The Cytoplasmic segment spans residues 449–452; it reads RQTG. The chain crosses the membrane as a helical span at residues 453–473; sequence MGLVGIFSRIGGILTPLVILL. Over 474-478 the chain is Extracellular; the sequence is GEYHA. Residues 479 to 499 form a helical membrane-spanning segment; the sequence is ALPMLIYGSLPIVAGLLCTLL. At 500-551 the chain is on the cytoplasmic side; the sequence is PETHGQGLKDTLQDLELGPHPRSPKSVPSEKETEAKGRTSSPGVAFVSSTYF. A disordered region spans residues 511 to 551; it reads LQDLELGPHPRSPKSVPSEKETEAKGRTSSPGVAFVSSTYF. Positions 527–536 are enriched in basic and acidic residues; the sequence is PSEKETEAKG. Over residues 537-551 the composition is skewed to polar residues; that stretch reads RTSSPGVAFVSSTYF.

It belongs to the major facilitator (TC 2.A.1) superfamily. Organic cation transporter (TC 2.A.1.19) family. In terms of processing, glycosylated. As to expression, ubiquitous. Highly expressed in kidneys and to a weaker extent in brain, heart, and intestine. In kidneys, expressed in proximal convoluted tubule. In kidneys, also expressed in cortical collecting duct, whereas glomerulus and thick ascending limb exhibit no expression.

It is found in the apical cell membrane. It carries out the reaction urate(out) + (S)-lactate(in) = urate(in) + (S)-lactate(out). The catalysed reaction is urate(out) + succinate(in) = urate(in) + succinate(out). The enzyme catalyses urate(out) + glutathione(in) = urate(in) + glutathione(out). It catalyses the reaction nicotinate(in) + urate(out) = nicotinate(out) + urate(in). It carries out the reaction orotate(out) + a carboxylate(in) = orotate(in) + a carboxylate(out). Its function is as follows. Anion antiporter that mediates the transport of urate, orotate and nicotinate in exchange for organic or inorganic anions. Translocates urate and orotate across the apical membrane of proximal tubule epithelial cells and involved in urate renal reabsorption. Possibly involved in orotate renal reabsorption and nicotinate intestinal reabsorption. Mediates urate uptake by an exchange with organic anions such as (S)-lactate, succinate, glutathione and nicotinate. Urate and orotate transports are Cl(-)-dependent. Shows similar transport characteristics as the urate/orotate renal antiporter SLC22A12/URAT1 and may act as a compensator of SLC22A12/URAT1 in certain conditions. This is Solute carrier family 22 member 13 from Homo sapiens (Human).